The sequence spans 262 residues: Type III pantothenate kinase (262 aa).

ATP is bound at residue 9-16 (DSGNTRVK). Residues Y93 and 100–103 (GSDR) each bind substrate. D102 acts as the Proton acceptor in catalysis. D122 lines the K(+) pocket. T125 lines the ATP pocket. T175 provides a ligand contact to substrate.

It belongs to the type III pantothenate kinase family. In terms of assembly, homodimer. NH4(+) serves as cofactor. K(+) is required as a cofactor.

Its subcellular location is the cytoplasm. It carries out the reaction (R)-pantothenate + ATP = (R)-4'-phosphopantothenate + ADP + H(+). It functions in the pathway cofactor biosynthesis; coenzyme A biosynthesis; CoA from (R)-pantothenate: step 1/5. In terms of biological role, catalyzes the phosphorylation of pantothenate (Pan), the first step in CoA biosynthesis. This Nitrosospira multiformis (strain ATCC 25196 / NCIMB 11849 / C 71) protein is Type III pantothenate kinase.